Reading from the N-terminus, the 370-residue chain is Cell division protein DivIB (370 aa).

The segment at 1–65 is disordered; sequence MKKKKDEELT…SNKKGTKRIV (65 aa). Topologically, residues 1–74 are cytoplasmic; it reads MKKKKDEELT…VKEQRLSRQK (74 aa). Composition is skewed to basic residues over residues 25-34 and 47-63; these read SRFKRKRKAT and RNNR…GTKR. Residues 75–95 traverse the membrane as a helical segment; sequence LGILIGSTLIVIALFFGYFYS. Residues 96 to 370 are Extracellular-facing; sequence SISRVQKFSV…STVNTQQDID (275 aa). Residues 98 to 169 enclose the POTRA domain; sequence SRVQKFSVSG…GKVKIKVKEN (72 aa). The segment at 295 to 370 is disordered; the sequence is SGWTDEAKAA…STVNTQQDID (76 aa). Composition is skewed to low complexity over residues 304–314 and 327–342; these read ASESSKSAESS and SESA…STET. Over residues 356-370 the composition is skewed to polar residues; sequence SSNAESTVNTQQDID.

It belongs to the FtsQ/DivIB family. DivIB subfamily.

The protein localises to the cell membrane. Functionally, cell division protein that may be involved in stabilizing or promoting the assembly of the division complex. This Pediococcus pentosaceus (strain ATCC 25745 / CCUG 21536 / LMG 10740 / 183-1w) protein is Cell division protein DivIB.